We begin with the raw amino-acid sequence, 343 residues long: Single-pass membrane and coiled-coil domain-containing protein 2 (343 aa).

Residues 86-99 are compositionally biased toward basic and acidic residues; it reads EHDQDLSKQDKQET. A disordered region spans residues 86–108; it reads EHDQDLSKQDKQETDVDEDPQAS. A coiled-coil region spans residues 152–238; it reads TEKIDNIIKK…SAKLRMYQME (87 aa). The helical transmembrane segment at 284–304 threads the bilayer; that stretch reads IFIMFDVLTVTGLLCYILFFG.

The protein localises to the membrane. This chain is Single-pass membrane and coiled-coil domain-containing protein 2 (SMCO2), found in Homo sapiens (Human).